We begin with the raw amino-acid sequence, 391 residues long: MATRIAMVAGEASGDLLASHLIRAIRQQVPEAEFYGIGGPKMQAEGFDALWPCERLAVHGYVDALKRYRELSGIRKALLRRVQADRPDAFIGVDAPDFNLWLEGRIRSSGIPAIHFVSPSIWAWRGGRIKGIARSVSHMLCLFPFEPALYEKAGIPVSYVGHPLADVFPLVPDRAAARELLSLPTDCRIVALLPGSRQSEVRSLAATYIETARLLAERHPDIGFVVPLATRETRALFEQALHAADADELPIRLLFGHAVEAMTAADVVLVASGTASLEAALLKRPMVISYRIGKWQYRLMKRMAYLPWVGLPNILCNDSVVPELLQDDATPQALADALDRWLNDADACAELALRFDALHRELRQDTAGRAAAAILPYLNRSPEWKPSRQSA.

The protein belongs to the LpxB family.

The catalysed reaction is a lipid X + a UDP-2-N,3-O-bis[(3R)-3-hydroxyacyl]-alpha-D-glucosamine = a lipid A disaccharide + UDP + H(+). Its pathway is bacterial outer membrane biogenesis; LPS lipid A biosynthesis. Functionally, condensation of UDP-2,3-diacylglucosamine and 2,3-diacylglucosamine-1-phosphate to form lipid A disaccharide, a precursor of lipid A, a phosphorylated glycolipid that anchors the lipopolysaccharide to the outer membrane of the cell. In Aromatoleum aromaticum (strain DSM 19018 / LMG 30748 / EbN1) (Azoarcus sp. (strain EbN1)), this protein is Lipid-A-disaccharide synthase.